The following is a 360-amino-acid chain: tRNA pseudouridine synthase D (360 aa).

Aspartate 76 functions as the Nucleophile in the catalytic mechanism. In terms of domain architecture, TRUD spans glycine 151 to tryptophan 332.

It belongs to the pseudouridine synthase TruD family.

It carries out the reaction uridine(13) in tRNA = pseudouridine(13) in tRNA. Its function is as follows. Responsible for synthesis of pseudouridine from uracil-13 in transfer RNAs. This chain is tRNA pseudouridine synthase D, found in Nitratiruptor sp. (strain SB155-2).